We begin with the raw amino-acid sequence, 235 residues long: Ribonuclease 3 (235 aa).

The 126-residue stretch at 6 to 131 (IDQLEKLTGH…LIAVIYLDGG (126 aa)) folds into the RNase III domain. E44 is a binding site for Mg(2+). The active site involves D48. Positions 117 and 120 each coordinate Mg(2+). E120 is a catalytic residue. One can recognise a DRBM domain in the interval 156–225 (DAKTQLQEWA…AEKILRREGI (70 aa)).

Belongs to the ribonuclease III family. Homodimer. Mg(2+) is required as a cofactor.

The protein localises to the cytoplasm. It catalyses the reaction Endonucleolytic cleavage to 5'-phosphomonoester.. In terms of biological role, digests double-stranded RNA. Involved in the processing of primary rRNA transcript to yield the immediate precursors to the large and small rRNAs (23S and 16S). Processes some mRNAs, and tRNAs when they are encoded in the rRNA operon. Processes pre-crRNA and tracrRNA of type II CRISPR loci if present in the organism. In Bartonella henselae (strain ATCC 49882 / DSM 28221 / CCUG 30454 / Houston 1) (Rochalimaea henselae), this protein is Ribonuclease 3.